Reading from the N-terminus, the 395-residue chain is GPI-anchor transamidase (395 aa).

A signal peptide spans 1–27 (MAAPCFLTLRVATLAALALLSLGSSAA). Over 28–368 (GHIEDQAEQF…PKPRDWHPPG (341 aa)) the chain is Lumenal. Ca(2+) contacts are provided by aspartate 79, isoleucine 82, glutamate 118, and aspartate 120. The active-site Proton donor is the histidine 164. Cysteine 206 functions as the Nucleophile; acyl-thioester intermediate in the catalytic mechanism. A protein is bound by residues cysteine 206, serine 232, and serine 234. The interval 231 to 236 (DSLSHQ) is autoinhibitory loop. Cysteine 275 and cysteine 280 form a disulfide bridge. A helical transmembrane segment spans residues 369 to 385 (GFILGLWALIIMVFFKT). The Cytoplasmic segment spans residues 386–395 (YGIKHMKFIF).

It belongs to the peptidase C13 family. As to quaternary structure, heteropentamer. Part of the GPI-anchor transamidase complex, consisting of PIGK, PIGT, PIGS, PIGU and GAA1. Interacts with GPAA1. Interacts with PIGT; this interaction, via a disulfide link, stabilizes the expression of GAA1 and PIGK and links them to PIGS. Post-translationally, the disulfide bond between PIGK/GPI8 and PIGT is important for normal enzyme activity.

The protein localises to the endoplasmic reticulum membrane. It participates in glycolipid biosynthesis; glycosylphosphatidylinositol-anchor biosynthesis. In the absence of proproteins substrates, exists in an inactive state with a disrupted catalytic site by an autoinhibitory loop. The binding of proprotein substrates, particularly the CSP region, to GPI-T triggers concerted conformational changes that alleviate the inhibition by the autoinhibitory loop. Meanwhile, proprotein residues near the omega- site induce the formation of a catalytic cleft for catalysis, following which the products are released and GPI-T reverts to the inactive state. Its function is as follows. Catalytic subunit of the glycosylphosphatidylinositol-anchor (GPI-anchor) transamidase (GPI-T) complex that catalyzes the formation of the linkage between a proprotein and a GPI-anchor and participates in GPI anchored protein biosynthesis. Recognizes diverse proproteins at a C-terminal signal peptide (CSP) region that lacks consensus sequence and replaces it with a GPI-anchor via a transamidation reaction. Transamidation catalysis reaction follows a two-phase mechanism. In the acyl-enzyme phase, the carbonyl group of the proproteins's omega-site undergoes a nucleophilic attack forming an enzyme-substrate thioester bond. Followed by a general acid catalysis that allows CSP releasing, regenerating the carbonyl, and forming the acyl-enzyme intermediate. In the GPI-anchor attachment phase, the amino group of the GPI-anchor's ethanolamine phosphate, the one on third mannose (EtNP3), mediates a nucleophilic attack on the carbonyl of the acyl-enzyme intermediate, replacing the CSP, allowing GPI-anchor attachment to the omega-residue, therefore forming the product and freeing the enzyme. The polypeptide is GPI-anchor transamidase (Mus musculus (Mouse)).